The chain runs to 90 residues: Small ribosomal subunit protein bS16 (90 aa).

This sequence belongs to the bacterial ribosomal protein bS16 family.

In Streptococcus equi subsp. zooepidemicus (strain H70), this protein is Small ribosomal subunit protein bS16.